The following is a 399-amino-acid chain: Elongation factor Tu (399 aa).

Residues 10-207 form the tr-type G domain; sequence KTHMNVGTIG…AVDSYFPDPV (198 aa). Residues 19–26 are G1; that stretch reads GHIDHGKT. 19 to 26 serves as a coordination point for GTP; that stretch reads GHIDHGKT. Residue T26 participates in Mg(2+) binding. The interval 60–64 is G2; it reads GITIN. The tract at residues 81–84 is G3; the sequence is DCPG. GTP is bound by residues 81–85 and 136–139; these read DCPGH and NKVD. The interval 136-139 is G4; sequence NKVD. Residues 174 to 176 form a G5 region; the sequence is SAL.

It belongs to the TRAFAC class translation factor GTPase superfamily. Classic translation factor GTPase family. EF-Tu/EF-1A subfamily. Monomer.

The protein localises to the cytoplasm. The enzyme catalyses GTP + H2O = GDP + phosphate + H(+). Functionally, GTP hydrolase that promotes the GTP-dependent binding of aminoacyl-tRNA to the A-site of ribosomes during protein biosynthesis. The chain is Elongation factor Tu from Petrotoga mobilis (strain DSM 10674 / SJ95).